The chain runs to 143 residues: Pre-mRNA-splicing factor U5-Cwc21 (143 aa).

One can recognise a CWF21 domain in the interval 27–70 (EHHRSLRAIKLKVLLYREEREAAGVPPDVISRECATLHGSLLRN).

It belongs to the CWC21 family. In terms of assembly, associates with the NTC complex (or PRP19-associated complex). The NTC complex associates with the spliceosome after the release of the U1 and U4 snRNAs and forms the CWC spliceosome subcomplex reminiscent of a late-stage spliceosome. Associates specifically with U5-containing snRNPs.

The protein localises to the cytoplasm. The protein resides in the nucleus. Its function is as follows. Essential protein involved in pre-mRNA cis- and trans-splicing. May function at or prior to the first catalytic step of splicing at the catalytic center of the spliceosome. May do so by stabilizing the catalytic center or the position of the RNA substrate. In Trypanosoma brucei brucei (strain 927/4 GUTat10.1), this protein is Pre-mRNA-splicing factor U5-Cwc21.